A 374-amino-acid polypeptide reads, in one-letter code: 4-hydroxybenzoate polyprenyltransferase, mitochondrial (374 aa).

Residues 1–34 constitute a mitochondrion transit peptide; the sequence is MLRWGGAGLARGLRAVRSAWLRGPRGLPLALVRS. Residues 35–83 lie on the Mitochondrial matrix side of the membrane; it reads AGVPGARDRRAPAPGTQRGRALSLSAAAVVNSAPRPLQPYLRLMRLDKP. Residues 84–104 traverse the membrane as a helical segment; that stretch reads IGTWLLYLPCTWSIGLAADPG. Residues 105-108 lie on the Mitochondrial intermembrane side of the membrane; sequence CFPD. A helical membrane pass occupies residues 109–129; sequence WYMLSLFGTGAILMRGAGCTI. At 130–148 the chain is on the mitochondrial matrix side; it reads NDMWDRDFDKKVTRTANRP. Residues 149 to 169 traverse the membrane as a helical segment; sequence IAAGDISTFQSFVFLGGQLTL. The Mitochondrial intermembrane segment spans residues 170–172; the sequence is ALG. A helical membrane pass occupies residues 173-193; that stretch reads VLLCLNYYSIAMGAASLLLVV. The Mitochondrial matrix segment spans residues 194–200; it reads TYPLVKR. Residues 201–221 form a helical membrane-spanning segment; the sequence is ITFWPQLALGLTFNWGALLGW. The Mitochondrial intermembrane segment spans residues 222–230; the sequence is SAVKGSCDP. Residues 231–251 form a helical membrane-spanning segment; sequence AVCLPLYFSGVMWTLIYDTIY. The Mitochondrial matrix segment spans residues 252-277; it reads AHQDKKDDALIGLKSTALLFQENTRQ. The chain crosses the membrane as a helical span at residues 278-298; that stretch reads WLSGFGVAMVAALSLAGANNG. Over 299-332 the chain is Mitochondrial intermembrane; the sequence is QTVPYYAAVAAVGAHLAHQIYTVDIHRAEDCWDK. Residues 333–353 form a helical membrane-spanning segment; that stretch reads FTSNRTVGMLLFLGIVLGNLC. The Mitochondrial matrix portion of the chain corresponds to 354–374; it reads KEKTEEAKDAEAVRVGSEQTS.

Belongs to the UbiA prenyltransferase family. Mg(2+) is required as a cofactor.

It is found in the mitochondrion inner membrane. The enzyme catalyses an all-trans-polyprenyl diphosphate + 4-hydroxybenzoate = a 4-hydroxy-3-(all-trans-polyprenyl)benzoate + diphosphate. It carries out the reaction all-trans-decaprenyl diphosphate + 4-hydroxybenzoate = 4-hydroxy-3-(all-trans-decaprenyl)benzoate + diphosphate. It catalyses the reaction all-trans-nonaprenyl diphosphate + 4-hydroxybenzoate = 4-hydroxy-3-(all-trans-nonaprenyl)benzoate + diphosphate. It participates in cofactor biosynthesis; ubiquinone biosynthesis. In terms of biological role, mediates the second step in the final reaction sequence of coenzyme Q (CoQ) biosynthesis. Catalyzes the prenylation of para-hydroxybenzoate (PHB) with an all-trans polyprenyl donor (such as all-trans-nonaprenyl diphosphate). The length of the polyprenyl side chain varies depending on the species, in humans, the side chain is comprised of 10 isoprenyls producing CoQ10 (also known as ubiquinone), whereas rodents predominantly generate CoQ9. However, this specificity is not complete, human tissues have low amounts of CoQ9 and rodent organs contain some CoQ10. Plays a central role in the biosynthesis of CoQ9. CoQ9 is a vital molecule that transports electrons from mitochondrial respiratory chain complexes. CoQs also function as cofactors for uncoupling protein and play a role as regulators of the extracellularly-induced ceramide-dependent apoptotic pathway. Regulates mitochondrial permeability transition pore (mPTP) opening and ROS production (pivotal events in cell death) in a tissue specific manner. The chain is 4-hydroxybenzoate polyprenyltransferase, mitochondrial from Mus musculus (Mouse).